The chain runs to 128 residues: MASITSVVKTSELILKSPLLSKIVVPLAKTYVKFSGYRQLGFKMNDLIIEETPNMQLALRRLPPTESYDRVYRLIRATQFSLSHKLATGNDITKPEEDDHYLIPYILDVEAEAFEKDALDNLEVVKRK.

The protein belongs to the UQCRB/QCR7 family. As to quaternary structure, component of the ubiquinol-cytochrome c oxidoreductase (cytochrome b-c1 complex, complex III, CIII), a multisubunit enzyme composed of 3 respiratory subunits cytochrome b, cytochrome c1 and Rieske protein, 2 core protein subunits, and additional low-molecular weight protein subunits. The complex exists as an obligatory dimer and forms supercomplexes (SCs) in the inner mitochondrial membrane with cytochrome c oxidase (complex IV, CIV).

The protein localises to the mitochondrion inner membrane. In terms of biological role, component of the ubiquinol-cytochrome c oxidoreductase, a multisubunit transmembrane complex that is part of the mitochondrial electron transport chain which drives oxidative phosphorylation. The respiratory chain contains 3 multisubunit complexes succinate dehydrogenase (complex II, CII), ubiquinol-cytochrome c oxidoreductase (cytochrome b-c1 complex, complex III, CIII) and cytochrome c oxidase (complex IV, CIV), that cooperate to transfer electrons derived from NADH and succinate to molecular oxygen, creating an electrochemical gradient over the inner membrane that drives transmembrane transport and the ATP synthase. The cytochrome b-c1 complex catalyzes electron transfer from ubiquinol to cytochrome c, linking this redox reaction to translocation of protons across the mitochondrial inner membrane, with protons being carried across the membrane as hydrogens on the quinol. In the process called Q cycle, 2 protons are consumed from the matrix, 4 protons are released into the intermembrane space and 2 electrons are passed to cytochrome c. The sequence is that of Cytochrome b-c1 complex subunit 7 (QCR7) from Yarrowia lipolytica (strain CLIB 122 / E 150) (Yeast).